The following is a 492-amino-acid chain: Stromelysin-3 (492 aa).

Residues 1 to 35 form the signal peptide; it reads MARAACLLRAISRVLLLPLPLLLLLLLLLPSPLMA. Residues 36 to 101 constitute a propeptide, activation peptide; it reads RARPPESHRH…VLNARNRQKR (66 aa). Residues 82-89 carry the Cysteine switch motif; sequence LRCGVPDL. Cysteine 84, histidine 168, and aspartate 170 together coordinate Zn(2+). Residues aspartate 175, glycine 176, glycine 178, and isoleucine 180 each coordinate Ca(2+). 3 residues coordinate Zn(2+): histidine 183, histidine 196, and histidine 219. Glutamate 220 is an active-site residue. Histidine 223 and histidine 229 together coordinate Zn(2+). Hemopexin repeat units follow at residues 295 to 343, 344 to 386, 388 to 436, and 437 to 484; these read PDVC…WQGL, PSPV…KLGL, GSPV…WRGV, and PSEI…FFDC. Cysteine 298 and cysteine 484 form a disulfide bridge.

Belongs to the peptidase M10A family. Requires Ca(2+) as cofactor. Zn(2+) serves as cofactor. Post-translationally, the precursor is cleaved by a furin endopeptidase. In terms of tissue distribution, specifically expressed in the mammary gland during apoptosis.

The protein localises to the secreted. It is found in the extracellular space. It localises to the extracellular matrix. May play an important role in the progression of epithelial malignancies. The protein is Stromelysin-3 (Mmp11) of Mus musculus (Mouse).